A 399-amino-acid polypeptide reads, in one-letter code: Tyrosine--tRNA ligase 2 (399 aa).

Positions 42–51 match the 'HIGH' region motif; it reads PTAPDLHLGH. Residues 226–230 carry the 'KMSKS' region motif; it reads KMSKS. K229 provides a ligand contact to ATP. In terms of domain architecture, S4 RNA-binding spans 336 to 396; sequence MPVASVLNKA…GKKAFARITL (61 aa).

It belongs to the class-I aminoacyl-tRNA synthetase family. TyrS type 2 subfamily. Homodimer.

Its subcellular location is the cytoplasm. The enzyme catalyses tRNA(Tyr) + L-tyrosine + ATP = L-tyrosyl-tRNA(Tyr) + AMP + diphosphate + H(+). In terms of biological role, catalyzes the attachment of tyrosine to tRNA(Tyr) in a two-step reaction: tyrosine is first activated by ATP to form Tyr-AMP and then transferred to the acceptor end of tRNA(Tyr). The polypeptide is Tyrosine--tRNA ligase 2 (Pseudomonas aeruginosa (strain ATCC 15692 / DSM 22644 / CIP 104116 / JCM 14847 / LMG 12228 / 1C / PRS 101 / PAO1)).